The sequence spans 381 residues: Cytochrome b (381 aa).

Transmembrane regions (helical) follow at residues 34–54, 78–99, 114–134, and 179–199; these read FGSL…FLAM, WLIR…YLHI, WNIG…GYVL, and FFAF…IHLL. Positions 84 and 98 each coordinate heme b. Residues H183 and H197 each contribute to the heme b site. Position 202 (H202) interacts with a ubiquinone. 4 helical membrane-spanning segments follow: residues 227 to 247, 289 to 309, 321 to 341, and 348 to 368; these read YKDL…ALFM, LGGV…PLLH, LTQI…WIGG, and FITV…IIMP.

Belongs to the cytochrome b family. The cytochrome bc1 complex contains 3 respiratory subunits (MT-CYB, CYC1 and UQCRFS1), 2 core proteins (UQCRC1 and UQCRC2) and probably 6 low-molecular weight proteins. Requires heme b as cofactor.

The protein localises to the mitochondrion inner membrane. In terms of biological role, component of the ubiquinol-cytochrome c reductase complex (complex III or cytochrome b-c1 complex) that is part of the mitochondrial respiratory chain. The b-c1 complex mediates electron transfer from ubiquinol to cytochrome c. Contributes to the generation of a proton gradient across the mitochondrial membrane that is then used for ATP synthesis. In Sphyrna tiburo vespertina (Pacific bonnethead shark), this protein is Cytochrome b (mt-cyb).